A 148-amino-acid chain; its full sequence is Sporulation inhibitor of replication protein SirA (148 aa).

It belongs to the SirA family. In terms of assembly, interacts with DnaA. Forms a 1:1 complex with domain I of DnaA.

Its subcellular location is the cytoplasm. Functionally, inhibits DNA replication initiation during sporulation, preventing overinitiation and thus enforcing diploidy; probably the main regulator of sporulation replication initiation under Spo0A control. During sporulation SirA prevents DnaA association with the replication origin to prevent excessive chromosome replication. Alternatively SirA binds to domain I of DnaA and prevent its interaction with DnaD, preventing DNA replication initiation. Upon ectopic expression during vegetative growth reduces chromosome copy number, leading to elongated cells with that can have a single nucleoid or be anucleate. Ectopic expression during vegetative growth blocks DnaA at oriC while blocking recruitment of DnaD to oriC. Plays a significant role during the onset of sporulation. This Bacillus subtilis (strain 168) protein is Sporulation inhibitor of replication protein SirA.